The chain runs to 300 residues: Protoheme IX farnesyltransferase (300 aa).

9 helical membrane-spanning segments follow: residues 31 to 51 (VMSLVVFTGFSGMWLAPNSLH), 52 to 72 (PFISVIALICIAIGAGSAGAI), 92 to 112 (IVRGAIEADEALSFGLIMAFF), 123 to 145 (FLSALLLLFTIFYYICIYTMWLK), 152 to 172 (IVIGGAAGALPPVIGYASVSG), 179 to 199 (VILFLIIFIWTPPHSWALALF), 225 to 245 (ILIYSVLLFLTSLMPFFVGMS), 247 to 267 (IIYLVIAAVLGLVFLYYSISL), and 280 to 300 (FFAYSIFYLFFIFLLLDFCRV).

It belongs to the UbiA prenyltransferase family. Protoheme IX farnesyltransferase subfamily.

It localises to the cell inner membrane. The enzyme catalyses heme b + (2E,6E)-farnesyl diphosphate + H2O = Fe(II)-heme o + diphosphate. It functions in the pathway porphyrin-containing compound metabolism; heme O biosynthesis; heme O from protoheme: step 1/1. Functionally, converts heme B (protoheme IX) to heme O by substitution of the vinyl group on carbon 2 of heme B porphyrin ring with a hydroxyethyl farnesyl side group. The sequence is that of Protoheme IX farnesyltransferase from Rickettsia bellii (strain OSU 85-389).